Here is an 86-residue protein sequence, read N- to C-terminus: Anti-adapter protein IraP (86 aa).

A coiled-coil region spans residues 1 to 36 (MKNLIAELLLKLAQKEEESKELCAQVEALEIIVTAM).

This sequence belongs to the IraP family. Interacts with RssB.

Its subcellular location is the cytoplasm. Inhibits RpoS proteolysis by regulating RssB activity, thereby increasing the stability of the sigma stress factor RpoS especially during phosphate starvation, but also in stationary phase and during nitrogen starvation. Its effect on RpoS stability is due to its interaction with RssB, which probably blocks the interaction of RssB with RpoS, and the consequent delivery of the RssB-RpoS complex to the ClpXP protein degradation pathway. This chain is Anti-adapter protein IraP, found in Shigella boydii serotype 18 (strain CDC 3083-94 / BS512).